We begin with the raw amino-acid sequence, 187 residues long: Adenylate kinase (187 aa).

An ATP-binding site is contributed by 12-17 (GAGKGT). The interval 32–61 (STGDIFRANLAENTELGQKARQFMDAGDLV) is NMP. Residues Thr-33, Arg-38, 59–61 (DLV), 87–90 (GYPR), and Gln-94 each bind AMP. An LID region spans residues 128-134 (GRGRADD). Arg-129 contributes to the ATP binding site. Arg-131 and Arg-142 together coordinate AMP. ATP is bound at residue Arg-170.

It belongs to the adenylate kinase family. As to quaternary structure, monomer.

It is found in the cytoplasm. The catalysed reaction is AMP + ATP = 2 ADP. The protein operates within purine metabolism; AMP biosynthesis via salvage pathway; AMP from ADP: step 1/1. In terms of biological role, catalyzes the reversible transfer of the terminal phosphate group between ATP and AMP. Plays an important role in cellular energy homeostasis and in adenine nucleotide metabolism. The sequence is that of Adenylate kinase from Leuconostoc mesenteroides subsp. mesenteroides (strain ATCC 8293 / DSM 20343 / BCRC 11652 / CCM 1803 / JCM 6124 / NCDO 523 / NBRC 100496 / NCIMB 8023 / NCTC 12954 / NRRL B-1118 / 37Y).